A 352-amino-acid chain; its full sequence is Probable cytosolic iron-sulfur protein assembly protein CIAO1 homolog (352 aa).

7 WD repeats span residues 12–51 (ASNKRLWSLSWNHKGSVLISSGEDRVIKLWAKCNDQLWGS), 58–97 (AHKKSIRCVTWSPCGTYIASASFDGTVTIWKISEAHSAPE), 106–145 (GHTSEVKCVAWCPSGHLIATCGRDKSVWLWEFDDEEDVQC), 151–190 (PHSQDVKSVAWHPHGEVLVSTSYDNKINVYREELDDWTVF), 195–234 (GHDSTVWKAEFSPSGDILASCSDDLCVKLWSWEGVCGKSS), 245–284 (YHTRTIFDLNWSPDSQLLASCGSDNRLCIYKMPANGLTHI), and 303–352 (AHSE…EYEL).

Belongs to the WD repeat CIA1 family.

Essential component of the cytosolic iron-sulfur (Fe/S) protein assembly machinery. Required for the maturation of extramitochondrial Fe/S proteins. The polypeptide is Probable cytosolic iron-sulfur protein assembly protein CIAO1 homolog (Schistosoma japonicum (Blood fluke)).